We begin with the raw amino-acid sequence, 345 residues long: uncharacterized protein (345 aa).

It belongs to the cycloisomerase 2 family.

This is an uncharacterized protein from Staphylococcus saprophyticus subsp. saprophyticus (strain ATCC 15305 / DSM 20229 / NCIMB 8711 / NCTC 7292 / S-41).